The following is a 67-amino-acid chain: Large ribosomal subunit protein bL35 (67 aa).

Belongs to the bacterial ribosomal protein bL35 family.

In Agrobacterium fabrum (strain C58 / ATCC 33970) (Agrobacterium tumefaciens (strain C58)), this protein is Large ribosomal subunit protein bL35.